Here is an 84-residue protein sequence, read N- to C-terminus: uncharacterized protein (84 aa).

The disordered stretch occupies residues 1–21; that stretch reads MYYRRQGEPQEMYGNGNNSVS. Residues 49–69 traverse the membrane as a helical segment; sequence YIIYAIVAAILLLLFWLLYKK.

The protein localises to the membrane. This is an uncharacterized protein from Invertebrate iridescent virus 6 (IIV-6).